The chain runs to 588 residues: Adenine deaminase (588 aa).

Belongs to the metallo-dependent hydrolases superfamily. Adenine deaminase family. In terms of assembly, homodimer. Mn(2+) is required as a cofactor.

The enzyme catalyses adenine + H2O + H(+) = hypoxanthine + NH4(+). The protein is Adenine deaminase of Escherichia coli O139:H28 (strain E24377A / ETEC).